Reading from the N-terminus, the 230-residue chain is Ribonuclease 3 (230 aa).

In terms of domain architecture, RNase III spans 10-133; the sequence is DPRLLSRIGY…IIGAIYLDSG (124 aa). Glu-46 is a binding site for Mg(2+). Asp-50 is a catalytic residue. Positions 119 and 122 each coordinate Mg(2+). Residue Glu-122 is part of the active site. Residues 161–230 enclose the DRBM domain; that stretch reads DPKSRLQEYL…AAEILKLLEQ (70 aa).

The protein belongs to the ribonuclease III family. Homodimer. Mg(2+) is required as a cofactor.

The protein localises to the cytoplasm. It carries out the reaction Endonucleolytic cleavage to 5'-phosphomonoester.. In terms of biological role, digests double-stranded RNA. Involved in the processing of primary rRNA transcript to yield the immediate precursors to the large and small rRNAs (23S and 16S). Processes some mRNAs, and tRNAs when they are encoded in the rRNA operon. Processes pre-crRNA and tracrRNA of type II CRISPR loci if present in the organism. The polypeptide is Ribonuclease 3 (rnc) (Acinetobacter pittii (strain PHEA-2)).